Reading from the N-terminus, the 436-residue chain is Origin recognition complex subunit 4 (436 aa).

Lysine 7 is subject to N6-methyllysine. ATP is bound at residue 67–74; the sequence is GPRGSGKT.

It belongs to the ORC4 family. Component of ORC, a complex composed of at least 6 subunits: ORC1, ORC2, ORC3, ORC4, ORC5 and ORC6. ORC is regulated in a cell-cycle dependent manner. It is sequentially assembled at the exit from anaphase of mitosis and disassembled as cells enter S phase. Interacts with DBF4. Interacts with POLQ.

The protein localises to the nucleus. Component of the origin recognition complex (ORC) that binds origins of replication. DNA-binding is ATP-dependent. The specific DNA sequences that define origins of replication have not been identified yet. ORC is required to assemble the pre-replication complex necessary to initiate DNA replication. Binds histone H3 and H4 trimethylation marks H3K9me3, H3K27me3 and H4K20me3. The protein is Origin recognition complex subunit 4 (ORC4) of Pongo abelii (Sumatran orangutan).